The chain runs to 397 residues: L-cysteine desulfidase (397 aa).

C23 acts as the Proton acceptor in catalysis. [4Fe-4S] cluster-binding residues include C288, C330, and C337.

It belongs to the L-cysteine desulfidase family. In terms of assembly, homotrimer. [4Fe-4S] cluster is required as a cofactor.

The enzyme catalyses L-cysteine + H2O = hydrogen sulfide + pyruvate + NH4(+) + H(+). Catalyzes the cleavage of L-cysteine to form 2-aminoprop-2-enoate and sulfide. The former then spontaneously hydrolyzes to pyruvate and NH(3). May be responsible for the production of sulfide required for the biosynthesis of iron-sulfur centers in this archaea. This Methanococcus maripaludis (strain C5 / ATCC BAA-1333) protein is L-cysteine desulfidase.